A 111-amino-acid chain; its full sequence is Cytochrome c oxidase subunit 6A1, mitochondrial (111 aa).

The transit peptide at 1–26 directs the protein to the mitochondrion; it reads MASAVLSASRVSRPLGRALPGLRRPM. Residues 27–36 are Mitochondrial matrix-facing; it reads SSGAHGEEGS. The chain crosses the membrane as a helical span at residues 37–61; the sequence is ARMWKALTYFVALPGVGVSMLNVFL. At 62–111 the chain is on the mitochondrial intermembrane side; the sequence is KSRHEEHERPPFVAYPHLRIRTKPFPWGDGNHTLFHNPHVNPLPTGYEDE.

It belongs to the cytochrome c oxidase subunit 6A family. As to quaternary structure, component of the cytochrome c oxidase (complex IV, CIV), a multisubunit enzyme composed of 14 subunits. The complex is composed of a catalytic core of 3 subunits MT-CO1, MT-CO2 and MT-CO3, encoded in the mitochondrial DNA, and 11 supernumerary subunits COX4I, COX5A, COX5B, COX6A, COX6B, COX6C, COX7A, COX7B, COX7C, COX8 and NDUFA4, which are encoded in the nuclear genome. The complex exists as a monomer or a dimer and forms supercomplexes (SCs) in the inner mitochondrial membrane with NADH-ubiquinone oxidoreductase (complex I, CI) and ubiquinol-cytochrome c oxidoreductase (cytochrome b-c1 complex, complex III, CIII), resulting in different assemblies (supercomplex SCI(1)III(2)IV(1) and megacomplex MCI(2)III(2)IV(2)).

The protein localises to the mitochondrion inner membrane. The protein operates within energy metabolism; oxidative phosphorylation. Its function is as follows. Component of the cytochrome c oxidase, the last enzyme in the mitochondrial electron transport chain which drives oxidative phosphorylation. The respiratory chain contains 3 multisubunit complexes succinate dehydrogenase (complex II, CII), ubiquinol-cytochrome c oxidoreductase (cytochrome b-c1 complex, complex III, CIII) and cytochrome c oxidase (complex IV, CIV), that cooperate to transfer electrons derived from NADH and succinate to molecular oxygen, creating an electrochemical gradient over the inner membrane that drives transmembrane transport and the ATP synthase. Cytochrome c oxidase is the component of the respiratory chain that catalyzes the reduction of oxygen to water. Electrons originating from reduced cytochrome c in the intermembrane space (IMS) are transferred via the dinuclear copper A center (CU(A)) of subunit 2 and heme A of subunit 1 to the active site in subunit 1, a binuclear center (BNC) formed by heme A3 and copper B (CU(B)). The BNC reduces molecular oxygen to 2 water molecules unsing 4 electrons from cytochrome c in the IMS and 4 protons from the mitochondrial matrix. This chain is Cytochrome c oxidase subunit 6A1, mitochondrial (Cox6a1), found in Mus musculus (Mouse).